Consider the following 25-residue polypeptide: Cysteine-rich venom protein 25 (25 aa).

The interval 1–25 (NVDFNSESTRRKKKQKEIVDLXNSL) is disordered.

The protein belongs to the CRISP family. In terms of processing, contains 8 disulfide bonds. As to expression, expressed by the venom gland.

The protein resides in the secreted. This Naja haje haje (Egyptian cobra) protein is Cysteine-rich venom protein 25.